Reading from the N-terminus, the 81-residue chain is UPF0180 protein BLi01634/BL05144 (81 aa).

This sequence belongs to the UPF0180 family.

The chain is UPF0180 protein BLi01634/BL05144 from Bacillus licheniformis (strain ATCC 14580 / DSM 13 / JCM 2505 / CCUG 7422 / NBRC 12200 / NCIMB 9375 / NCTC 10341 / NRRL NRS-1264 / Gibson 46).